The chain runs to 135 residues: S-protein homolog 7 (135 aa).

An N-terminal signal peptide occupies residues 1–20 (MNNLFVLVIIIVLSAGSNNG).

The protein belongs to the plant self-incompatibility (S1) protein family.

It localises to the secreted. This is S-protein homolog 7 from Arabidopsis thaliana (Mouse-ear cress).